The sequence spans 620 residues: Chaperone protein HscA homolog (620 aa).

This sequence belongs to the heat shock protein 70 family.

Functionally, chaperone involved in the maturation of iron-sulfur cluster-containing proteins. Has a low intrinsic ATPase activity which is markedly stimulated by HscB. In Neisseria meningitidis serogroup B (strain ATCC BAA-335 / MC58), this protein is Chaperone protein HscA homolog.